Here is a 372-residue protein sequence, read N- to C-terminus: Chaperone protein DnaJ (372 aa).

Positions 5–70 (DYYDLLEVSR…EKRAGYDRYG (66 aa)) constitute a J domain. The CR-type zinc-finger motif lies at 134–212 (GIQAPIHYVT…CGGSGRKRDE (79 aa)). Zn(2+) is bound by residues cysteine 147, cysteine 150, cysteine 164, cysteine 167, cysteine 186, cysteine 189, cysteine 200, and cysteine 203. CXXCXGXG motif repeat units follow at residues 147-154 (CNTCQGTG), 164-171 (CNTCQGSG), 186-193 (CTTCYGEG), and 200-207 (CKKCGGSG).

The protein belongs to the DnaJ family. In terms of assembly, homodimer. The cofactor is Zn(2+).

Its subcellular location is the cytoplasm. Its function is as follows. Participates actively in the response to hyperosmotic and heat shock by preventing the aggregation of stress-denatured proteins and by disaggregating proteins, also in an autonomous, DnaK-independent fashion. Unfolded proteins bind initially to DnaJ; upon interaction with the DnaJ-bound protein, DnaK hydrolyzes its bound ATP, resulting in the formation of a stable complex. GrpE releases ADP from DnaK; ATP binding to DnaK triggers the release of the substrate protein, thus completing the reaction cycle. Several rounds of ATP-dependent interactions between DnaJ, DnaK and GrpE are required for fully efficient folding. Also involved, together with DnaK and GrpE, in the DNA replication of plasmids through activation of initiation proteins. The protein is Chaperone protein DnaJ of Wolbachia pipientis subsp. Culex pipiens (strain wPip).